The following is a 152-amino-acid chain: Protein SprT-like (152 aa).

The region spanning 13–148 (NYVKKVSIED…FACGYCHGRL (136 aa)) is the SprT-like domain. His72 lines the Zn(2+) pocket. Glu73 is an active-site residue. His76 lines the Zn(2+) pocket.

The protein belongs to the SprT family. It depends on Zn(2+) as a cofactor.

It is found in the cytoplasm. The protein is Protein SprT-like of Streptococcus agalactiae serotype III (strain NEM316).